Reading from the N-terminus, the 471-residue chain is Mannose-1-phosphate guanylyltransferase (471 aa).

Belongs to the mannose-6-phosphate isomerase type 2 family.

The enzyme catalyses alpha-D-mannose 1-phosphate + GTP + H(+) = GDP-alpha-D-mannose + diphosphate. It functions in the pathway nucleotide-sugar biosynthesis; GDP-alpha-D-mannose biosynthesis; GDP-alpha-D-mannose from alpha-D-mannose 1-phosphate (GTP route): step 1/1. Its pathway is bacterial outer membrane biogenesis; LPS O-antigen biosynthesis. In terms of biological role, involved in GDP-mannose biosynthesis which serves as the activated sugar nucleotide precursor for mannose residues in cell surface polysaccharides. This enzyme participates in synthesis of the LPS O9 antigen. The polypeptide is Mannose-1-phosphate guanylyltransferase (manC) (Escherichia coli).